The chain runs to 284 residues: MIDSKTVLLGLIGHPVEHSFSPIMHNAAINDLKINYVYLGFDISNENLKNVVNSAKTLSILGFNVTIPYKVEIMKYLDKIDDTAKFIGAVNTVKIENGEAVGYNTDGIGAKKSLEEEIGKFNNKNILMIGSGGSSRSISFELAKENEITIINRNIKNAKELSFEISKNLATKEYGEKYLKYGDLSTDISKFDIIINTTPVGMYPDVNSKPVIPLKNAKNDAIIMDIIYNPFEPVFLKEAKKYGLKTLNGLGMLIYQGAVSFEIWTGFKPDTNVMKNSIVNLLKS.

Residues S19–S21 and T66 each bind shikimate. K70 functions as the Proton acceptor in the catalytic mechanism. D82 is an NADP(+) binding site. The shikimate site is built by N91 and D106. Residues G130–S134 and I226 each bind NADP(+). Y228 is a binding site for shikimate. G249 contributes to the NADP(+) binding site.

It belongs to the shikimate dehydrogenase family. As to quaternary structure, homodimer.

It catalyses the reaction shikimate + NADP(+) = 3-dehydroshikimate + NADPH + H(+). Its pathway is metabolic intermediate biosynthesis; chorismate biosynthesis; chorismate from D-erythrose 4-phosphate and phosphoenolpyruvate: step 4/7. Functionally, involved in the biosynthesis of the chorismate, which leads to the biosynthesis of aromatic amino acids. Catalyzes the reversible NADPH linked reduction of 3-dehydroshikimate (DHSA) to yield shikimate (SA). This is Shikimate dehydrogenase (NADP(+)) from Methanococcus vannielii (strain ATCC 35089 / DSM 1224 / JCM 13029 / OCM 148 / SB).